A 312-amino-acid polypeptide reads, in one-letter code: DDRGK domain-containing protein 1 (312 aa).

Over 1–2 (ME) the chain is Lumenal. A helical membrane pass occupies residues 3-23 (LIILVGIAIALLVVIITLYLL). At 24-312 (QKKNAAPETK…ISAGGEEASS (289 aa)) the chain is on the cytoplasmic side. A disordered region spans residues 30-163 (PETKPAAAPQ…KQQEDLEAEV (134 aa)). Positions 52 to 85 (RRAQIARNQRNRLRQNAPAAPAGQVAPAAGAPAA) are enriched in low complexity. Acidic residues predominate over residues 90-99 (DHEDEGQVDA). Over residues 110–163 (LDEKMGAKKRAKMEAKEQKRLQREQELHDREQRKVKEAKEEAERKQQEDLEAEV) the composition is skewed to basic and acidic residues.

Belongs to the DDRGK1 family. In terms of assembly, interacts with Atg9; the interaction is transient.

It is found in the endoplasmic reticulum membrane. Functionally, substrate adapter for ufmylation, the covalent attachment of the ubiquitin-like modifier UFM1 to substrate proteins. Required for ufmylation of Atg9; protects the nervous system during aging, possibly by stabilizing Atg9 and supporting its function. The protein is DDRGK domain-containing protein 1 of Drosophila erecta (Fruit fly).